Reading from the N-terminus, the 261-residue chain is Triosephosphate isomerase (261 aa).

Position 10–12 (10–12 (NWK)) interacts with substrate. H100 acts as the Electrophile in catalysis. E172 functions as the Proton acceptor in the catalytic mechanism. Residues G178, S218, and 239–240 (GG) contribute to the substrate site.

This sequence belongs to the triosephosphate isomerase family. In terms of assembly, homodimer.

It localises to the cytoplasm. It carries out the reaction D-glyceraldehyde 3-phosphate = dihydroxyacetone phosphate. The protein operates within carbohydrate biosynthesis; gluconeogenesis. It functions in the pathway carbohydrate degradation; glycolysis; D-glyceraldehyde 3-phosphate from glycerone phosphate: step 1/1. Its function is as follows. Involved in the gluconeogenesis. Catalyzes stereospecifically the conversion of dihydroxyacetone phosphate (DHAP) to D-glyceraldehyde-3-phosphate (G3P). This Mycobacterium tuberculosis (strain CDC 1551 / Oshkosh) protein is Triosephosphate isomerase.